The sequence spans 423 residues: Gamma-glutamyl phosphate reductase (423 aa).

This sequence belongs to the gamma-glutamyl phosphate reductase family.

The protein localises to the cytoplasm. It catalyses the reaction L-glutamate 5-semialdehyde + phosphate + NADP(+) = L-glutamyl 5-phosphate + NADPH + H(+). Its pathway is amino-acid biosynthesis; L-proline biosynthesis; L-glutamate 5-semialdehyde from L-glutamate: step 2/2. In terms of biological role, catalyzes the NADPH-dependent reduction of L-glutamate 5-phosphate into L-glutamate 5-semialdehyde and phosphate. The product spontaneously undergoes cyclization to form 1-pyrroline-5-carboxylate. This Burkholderia vietnamiensis (strain G4 / LMG 22486) (Burkholderia cepacia (strain R1808)) protein is Gamma-glutamyl phosphate reductase.